The chain runs to 258 residues: tRNA pseudouridine synthase A (258 aa).

Catalysis depends on aspartate 52, which acts as the Nucleophile. Tyrosine 110 is a substrate binding site.

Belongs to the tRNA pseudouridine synthase TruA family. As to quaternary structure, homodimer.

It carries out the reaction uridine(38/39/40) in tRNA = pseudouridine(38/39/40) in tRNA. Functionally, formation of pseudouridine at positions 38, 39 and 40 in the anticodon stem and loop of transfer RNAs. The protein is tRNA pseudouridine synthase A of Francisella tularensis subsp. mediasiatica (strain FSC147).